A 210-amino-acid chain; its full sequence is Thymidylate kinase (210 aa).

11–18 is a binding site for ATP; sequence GVDGAGKT.

It belongs to the thymidylate kinase family.

It catalyses the reaction dTMP + ATP = dTDP + ADP. Phosphorylation of dTMP to form dTDP in both de novo and salvage pathways of dTTP synthesis. This is Thymidylate kinase (tmk) from Mycoplasma pneumoniae (strain ATCC 29342 / M129 / Subtype 1) (Mycoplasmoides pneumoniae).